Here is a 402-residue protein sequence, read N- to C-terminus: Putative nickel insertion protein (402 aa).

The protein belongs to the LarC family.

This chain is Putative nickel insertion protein, found in Synechococcus elongatus (strain ATCC 33912 / PCC 7942 / FACHB-805) (Anacystis nidulans R2).